We begin with the raw amino-acid sequence, 390 residues long: Pyruvate dehydrogenase E1 component subunit alpha, somatic form, mitochondrial (390 aa).

The N-terminal 29 residues, 1 to 29, are a transit peptide targeting the mitochondrion; it reads MRKMLAAVSRVLSGASQKPASRVLVASRN. N6-acetyllysine; alternate is present on Lys63. Lys63 is modified (N6-succinyllysine; alternate). Positions 92, 118, 119, 157, 165, 167, 196, 197, 198, 225, and 227 each coordinate pyruvate. Thiamine diphosphate is bound by residues Tyr118 and Arg119. Residues Gly165, Val167, Asp196, Gly197, Ala198, and Asn225 each coordinate thiamine diphosphate. Asp196 provides a ligand contact to Mg(2+). Mg(2+)-binding residues include Asn225 and Tyr227. Ser232 is subject to Phosphoserine; by PDK1. Lys244 is subject to N6-acetyllysine; alternate. An N6-succinyllysine; alternate modification is found at Lys244. N6-succinyllysine is present on Lys277. His292 lines the thiamine diphosphate pocket. Ser293 bears the Phosphoserine; by PDK1, PDK2, PDK3 and PDK4 mark. Ser295 carries the post-translational modification Phosphoserine. Phosphoserine; by PDK1, PDK2, PDK3 and PDK4 is present on Ser300. A Phosphotyrosine modification is found at Tyr301. Position 313 is an N6-acetyllysine; alternate (Lys313). Lys313 carries the post-translational modification N6-succinyllysine; alternate. Residues Lys321 and Lys336 each carry the N6-acetyllysine modification. At Lys385 the chain carries N6-succinyllysine.

Heterotetramer of two PDHA1 and two PDHB subunits. The heterotetramer interacts with DLAT, and is part of the multimeric pyruvate dehydrogenase complex that contains multiple copies of pyruvate dehydrogenase (E1), dihydrolipoamide acetyltransferase (DLAT, E2) and lipoamide dehydrogenase (DLD, E3). These subunits are bound to an inner core composed of about 48 DLAT and 12 PDHX molecules. It depends on thiamine diphosphate as a cofactor. Mg(2+) serves as cofactor. In terms of processing, phosphorylation at Ser-232, Ser-293 and Ser-300 by PDK family kinases inactivates the enzyme; for this phosphorylation at a single site is sufficient. Phosphorylation at Ser-293 interferes with access to active site, and thereby inactivates the enzyme. Dephosphorylation at all three sites, i.e. at Ser-232, Ser-293 and Ser-300, is required for reactivation. Acetylation alters the phosphorylation pattern. Deacetylated by SIRT3.

It is found in the mitochondrion matrix. The enzyme catalyses N(6)-[(R)-lipoyl]-L-lysyl-[protein] + pyruvate + H(+) = N(6)-[(R)-S(8)-acetyldihydrolipoyl]-L-lysyl-[protein] + CO2. Pyruvate dehydrogenase activity is inhibited by phosphorylation of PDHA1; it is reactivated by dephosphorylation. Its function is as follows. The pyruvate dehydrogenase complex catalyzes the overall conversion of pyruvate to acetyl-CoA and CO(2), and thereby links the glycolytic pathway to the tricarboxylic cycle. In Macaca fascicularis (Crab-eating macaque), this protein is Pyruvate dehydrogenase E1 component subunit alpha, somatic form, mitochondrial (PDHA1).